A 198-amino-acid chain; its full sequence is GTP cyclohydrolase-2 (198 aa).

52–56 (RMHSE) is a GTP binding site. Zn(2+) contacts are provided by C57, C68, and C70. Residues Q73, 94 to 96 (EGR), and T116 contribute to the GTP site. The active-site Proton acceptor is the D128. The Nucleophile role is filled by R130. The GTP site is built by T151 and K156.

This sequence belongs to the GTP cyclohydrolase II family. Zn(2+) serves as cofactor.

It catalyses the reaction GTP + 4 H2O = 2,5-diamino-6-hydroxy-4-(5-phosphoribosylamino)-pyrimidine + formate + 2 phosphate + 3 H(+). Its pathway is cofactor biosynthesis; riboflavin biosynthesis; 5-amino-6-(D-ribitylamino)uracil from GTP: step 1/4. Catalyzes the conversion of GTP to 2,5-diamino-6-ribosylamino-4(3H)-pyrimidinone 5'-phosphate (DARP), formate and pyrophosphate. In Vibrio parahaemolyticus serotype O3:K6 (strain RIMD 2210633), this protein is GTP cyclohydrolase-2.